The primary structure comprises 257 residues: tRNA pseudouridine synthase A (257 aa).

Asp-53 serves as the catalytic Nucleophile. Tyr-111 serves as a coordination point for substrate.

The protein belongs to the tRNA pseudouridine synthase TruA family. Homodimer.

The enzyme catalyses uridine(38/39/40) in tRNA = pseudouridine(38/39/40) in tRNA. Its function is as follows. Formation of pseudouridine at positions 38, 39 and 40 in the anticodon stem and loop of transfer RNAs. The protein is tRNA pseudouridine synthase A of Xanthomonas axonopodis pv. citri (strain 306).